The following is a 617-amino-acid chain: MAEAKTHWLGAALSLIPLIFLISGAEAASFQRNQLLQKEPDLRLENVQKFPSPEMIRALEYIEKLRQQAHKEESSPDYNPYQGVSIPLQQKENGDESHLPERDSLSEEDWMRIILEALRQVENEPQSVPKENKPHALNSEKNFPIDMSDDYETQQWPERKLKHMQFPPMYEENSRDNPFKRTNEIVEEQYTPQSLATLESVFQELGKLTGPNNQKRERMDEEQKLYTDDEDDIYKANNIAYEDVVGGEDWNPVEEKIESQTQEEVRDSKENTEKNEQINDEVKRSGQLGIQEEDLRKESKDQLSDDVSKVITYLKRLVNAAGSGRLQNGQNGERATRLFEKPLDSQSIYQLIEISRNLQIPPEDLIEMLKTGEKPNGSVEPERELDLPVDLDDISEADLDHPDLFQNKMLSKSGYPKTVGRAGTEALPDGLSVEDILNLLGMESAANQKTSYFPNPYNQEKVLPRLPYGPGRSRSNQLPKAAWMPYVENRQMAYENLNDKDQELGEYLARMLVKYPEIINSNQVKRVPGQGSPEDDLQEEEQIEQAIKEHLNQGSSQETDKLAPVSKRFPVGPPKNDDTPNRQYLDEDLLTKVLEYLNQEKAEKGREHIAKRAMENM.

The first 27 residues, 1-27 (MAEAKTHWLGAALSLIPLIFLISGAEA), serve as a signal peptide directing secretion. Residues 28–30 (ASF) constitute a propeptide that is removed on maturation. Residues 123 to 147 (NEPQSVPKENKPHALNSEKNFPIDM) form a disordered region. Y151 is subject to Sulfotyrosine. Phosphoserine is present on residues S174, S268, S432, S532, S555, and S556. The disordered stretch occupies residues 552–583 (NQGSSQETDKLAPVSKRFPVGPPKNDDTPNRQ).

The protein belongs to the chromogranin/secretogranin protein family. In terms of assembly, interacts with Secretogranin III/SCG3.

It localises to the secreted. Neuroendocrine protein of the granin family that regulates the biogenesis of secretory granules. The polypeptide is Secretogranin-2 (SCG2) (Macaca fascicularis (Crab-eating macaque)).